A 289-amino-acid polypeptide reads, in one-letter code: Glycine--tRNA ligase alpha subunit (289 aa).

The protein belongs to the class-II aminoacyl-tRNA synthetase family. In terms of assembly, tetramer of two alpha and two beta subunits.

The protein localises to the cytoplasm. The catalysed reaction is tRNA(Gly) + glycine + ATP = glycyl-tRNA(Gly) + AMP + diphosphate. The protein is Glycine--tRNA ligase alpha subunit of Rickettsia bellii (strain OSU 85-389).